Here is a 76-residue protein sequence, read N- to C-terminus: Large ribosomal subunit protein uL24 (76 aa).

Belongs to the universal ribosomal protein uL24 family. Part of the 50S ribosomal subunit.

Functionally, one of two assembly initiator proteins, it binds directly to the 5'-end of the 23S rRNA, where it nucleates assembly of the 50S subunit. Its function is as follows. One of the proteins that surrounds the polypeptide exit tunnel on the outside of the subunit. The polypeptide is Large ribosomal subunit protein uL24 (Campylobacter hominis (strain ATCC BAA-381 / DSM 21671 / CCUG 45161 / LMG 19568 / NCTC 13146 / CH001A)).